The primary structure comprises 843 residues: Taste receptor type 1 member 2 (843 aa).

The N-terminal stretch at 1 to 19 is a signal peptide; it reads MGPQARTLCLLSLLLHVLP. The Extracellular portion of the chain corresponds to 20–570; that stretch reads KPGKLVENSD…TFLEWHEVPT (551 aa). N-linked (GlcNAc...) asparagine glycans are attached at residues Asn87, Asn296, Asn316, Asn355, Asn372, Asn432, Asn484, Asn491, and Asn531. Residues 571–591 form a helical membrane-spanning segment; that stretch reads IVVAILAALGFFSTLAILFIF. Residues 592–606 lie on the Cytoplasmic side of the membrane; the sequence is WRHFQTPMVRSAGGP. The helical transmembrane segment at 607–627 threads the bilayer; the sequence is MCFLMLVPLLLAFGMVPVYVG. At 628–642 the chain is on the extracellular side; the sequence is PPTVFSCFCRQAFFT. The chain crosses the membrane as a helical span at residues 643–663; the sequence is VCFSICLSCITVRSFQIVCVF. The Cytoplasmic portion of the chain corresponds to 664-682; it reads KMARRLPSAYSFWMRYHGP. The chain crosses the membrane as a helical span at residues 683-703; sequence YVFVAFITAIKVALVVGNMLA. The Extracellular segment spans residues 704-731; that stretch reads TTINPIGRTDPDDPNIMILSCHPNYRNG. The chain crosses the membrane as a helical span at residues 732-752; it reads LLFNTSMDLLLSVLGFSFAYM. Residues 753 to 764 are Cytoplasmic-facing; that stretch reads GKELPTNYNEAK. Residues 765–785 traverse the membrane as a helical segment; the sequence is FITLSMTFSFTSSISLCTFMS. Residues 786-789 lie on the Extracellular side of the membrane; it reads VHDG. Residues 790–810 traverse the membrane as a helical segment; the sequence is VLVTIMDLLVTVLNFLAIGLG. At 811-843 the chain is on the cytoplasmic side; the sequence is YFGPKCYMILFYPERNTSAYFNSMIQGYTMRKS.

It belongs to the G-protein coupled receptor 3 family. TAS1R subfamily. As to quaternary structure, forms heterodimers with TAS1R3. In terms of tissue distribution, abundantly expressed in circumvallate and foliate papillae.

It localises to the cell membrane. Putative taste receptor. TAS1R2/TAS1R3 recognizes diverse natural and synthetic sweeteners. In Rattus norvegicus (Rat), this protein is Taste receptor type 1 member 2 (Tas1r2).